The chain runs to 1000 residues: Exportin-T (1000 aa).

It belongs to the exportin family.

The protein resides in the nucleus. The protein localises to the cytoplasm. TRNA nucleus export receptor which facilitates tRNA translocation across the nuclear pore complex. Involved in pre-tRNA splicing, probably by affecting the interaction of pre-tRNA with splicing endonuclease. The polypeptide is Exportin-T (LOS1) (Debaryomyces hansenii (strain ATCC 36239 / CBS 767 / BCRC 21394 / JCM 1990 / NBRC 0083 / IGC 2968) (Yeast)).